Reading from the N-terminus, the 316-residue chain is Ribose-phosphate pyrophosphokinase (316 aa).

Residues 41-43 (DGE) and 100-101 (RQ) contribute to the ATP site. Residues His-134 and Asp-175 each coordinate Mg(2+). The active site involves Lys-198. D-ribose 5-phosphate is bound by residues Arg-200, Asp-224, and 228–232 (DTARS).

This sequence belongs to the ribose-phosphate pyrophosphokinase family. Class I subfamily. In terms of assembly, homohexamer. The cofactor is Mg(2+).

Its subcellular location is the cytoplasm. It carries out the reaction D-ribose 5-phosphate + ATP = 5-phospho-alpha-D-ribose 1-diphosphate + AMP + H(+). It participates in metabolic intermediate biosynthesis; 5-phospho-alpha-D-ribose 1-diphosphate biosynthesis; 5-phospho-alpha-D-ribose 1-diphosphate from D-ribose 5-phosphate (route I): step 1/1. In terms of biological role, involved in the biosynthesis of the central metabolite phospho-alpha-D-ribosyl-1-pyrophosphate (PRPP) via the transfer of pyrophosphoryl group from ATP to 1-hydroxyl of ribose-5-phosphate (Rib-5-P). This Thermosipho africanus (strain TCF52B) protein is Ribose-phosphate pyrophosphokinase.